A 405-amino-acid chain; its full sequence is Phosphopentomutase (405 aa).

6 residues coordinate Mn(2+): D10, D303, H308, D344, H345, and H356.

It belongs to the phosphopentomutase family. Requires Mn(2+) as cofactor.

It localises to the cytoplasm. The catalysed reaction is 2-deoxy-alpha-D-ribose 1-phosphate = 2-deoxy-D-ribose 5-phosphate. It carries out the reaction alpha-D-ribose 1-phosphate = D-ribose 5-phosphate. It participates in carbohydrate degradation; 2-deoxy-D-ribose 1-phosphate degradation; D-glyceraldehyde 3-phosphate and acetaldehyde from 2-deoxy-alpha-D-ribose 1-phosphate: step 1/2. In terms of biological role, isomerase that catalyzes the conversion of deoxy-ribose 1-phosphate (dRib-1-P) and ribose 1-phosphate (Rib-1-P) to deoxy-ribose 5-phosphate (dRib-5-P) and ribose 5-phosphate (Rib-5-P), respectively. This Shewanella sediminis (strain HAW-EB3) protein is Phosphopentomutase.